A 445-amino-acid polypeptide reads, in one-letter code: Chromosomal replication initiator protein DnaA (445 aa).

The segment at 1 to 73 is domain I, interacts with DnaA modulators; that stretch reads MSTHLTETWE…VNALKLLTSK (73 aa). The segment at 73–106 is domain II; sequence KKYNIDFIVTTEEKIEKNHNNEKSNIVVNDEMST. The interval 107 to 323 is domain III, AAA+ region; it reads MLNPKYTFDS…GALIRIVAFS (217 aa). ATP is bound by residues glycine 151, glycine 153, lysine 154, and threonine 155. The segment at 324 to 445 is domain IV, binds dsDNA; the sequence is SLTNKEISVD…NDLNKRINQK (122 aa).

Belongs to the DnaA family. In terms of assembly, oligomerizes as a right-handed, spiral filament on DNA at oriC.

The protein resides in the cytoplasm. In terms of biological role, plays an essential role in the initiation and regulation of chromosomal replication. ATP-DnaA binds to the origin of replication (oriC) to initiate formation of the DNA replication initiation complex once per cell cycle. Binds the DnaA box (a 9 base pair repeat at the origin) and separates the double-stranded (ds)DNA. Forms a right-handed helical filament on oriC DNA; dsDNA binds to the exterior of the filament while single-stranded (ss)DNA is stabiized in the filament's interior. The ATP-DnaA-oriC complex binds and stabilizes one strand of the AT-rich DNA unwinding element (DUE), permitting loading of DNA polymerase. After initiation quickly degrades to an ADP-DnaA complex that is not apt for DNA replication. Binds acidic phospholipids. The polypeptide is Chromosomal replication initiator protein DnaA (Clostridium botulinum (strain Loch Maree / Type A3)).